A 143-amino-acid chain; its full sequence is Large ribosomal subunit protein uL15 (143 aa).

The interval 20–52 (GRGIGSGKGKTAGRGHKGQHSRAGGYHKVGFEG) is disordered. Basic residues predominate over residues 30–39 (TAGRGHKGQH).

This sequence belongs to the universal ribosomal protein uL15 family. As to quaternary structure, part of the 50S ribosomal subunit.

In terms of biological role, binds to the 23S rRNA. In Coxiella burnetii (strain CbuG_Q212) (Coxiella burnetii (strain Q212)), this protein is Large ribosomal subunit protein uL15.